Reading from the N-terminus, the 529-residue chain is Beta-galactoside alpha-2,6-sialyltransferase 2 (529 aa).

Residues 1 to 11 are Cytoplasmic-facing; the sequence is MKPHLKQWRQR. The chain crosses the membrane as a helical; Signal-anchor for type II membrane protein span at residues 12–32; the sequence is MLFGLFAGGLLFLLIFIYFTD. The Lumenal segment spans residues 33–529; sequence SNPAEPVPSS…PAPSPVIPHS (497 aa). The segment at 142–186 is disordered; sequence SHSQGTLGFPSPGEPGPREGAFPAAQVQRRRVKKRHRRQRRSHVL. Residues 169–183 are compositionally biased toward basic residues; it reads QRRRVKKRHRRQRRS. A glycan (N-linked (GlcNAc...) asparagine) is linked at asparagine 211. 3 disulfides stabilise this stretch: cysteine 253–cysteine 519, cysteine 296–cysteine 448, and cysteine 466–cysteine 477.

Belongs to the glycosyltransferase 29 family.

The protein localises to the golgi apparatus. It localises to the golgi stack membrane. It carries out the reaction a beta-D-galactoside + CMP-N-acetyl-beta-neuraminate = an N-acetyl-alpha-neuraminyl-(2-&gt;6)-beta-D-galactosyl derivative + CMP + H(+). Transfers sialic acid from the donor of substrate CMP-sialic acid to galactose containing acceptor substrates. Has alpha-2,6-sialyltransferase activity toward oligosaccharides that have the Gal-beta-1,4-GlcNAc sequence at the non-reducing end of their carbohydrate groups, but it has weak or no activities toward glycoproteins and glycolipids. This is Beta-galactoside alpha-2,6-sialyltransferase 2 (ST6GAL2) from Pan troglodytes (Chimpanzee).